Here is a 287-residue protein sequence, read N- to C-terminus: Pyridoxal 5'-phosphate synthase subunit PdxS (287 aa).

Asp-21 contacts D-ribose 5-phosphate. The active-site Schiff-base intermediate with D-ribose 5-phosphate is Lys-78. Gly-150 lines the D-ribose 5-phosphate pocket. Residue Arg-162 coordinates D-glyceraldehyde 3-phosphate. D-ribose 5-phosphate contacts are provided by residues Gly-211 and 232-233; that span reads GS.

The protein belongs to the PdxS/SNZ family. In terms of assembly, in the presence of PdxT, forms a dodecamer of heterodimers.

The catalysed reaction is aldehydo-D-ribose 5-phosphate + D-glyceraldehyde 3-phosphate + L-glutamine = pyridoxal 5'-phosphate + L-glutamate + phosphate + 3 H2O + H(+). It participates in cofactor biosynthesis; pyridoxal 5'-phosphate biosynthesis. Catalyzes the formation of pyridoxal 5'-phosphate from ribose 5-phosphate (RBP), glyceraldehyde 3-phosphate (G3P) and ammonia. The ammonia is provided by the PdxT subunit. Can also use ribulose 5-phosphate and dihydroxyacetone phosphate as substrates, resulting from enzyme-catalyzed isomerization of RBP and G3P, respectively. This chain is Pyridoxal 5'-phosphate synthase subunit PdxS, found in Tropheryma whipplei (strain Twist) (Whipple's bacillus).